A 730-amino-acid chain; its full sequence is Catalase-peroxidase (730 aa).

Residues 92–225 (WHSAGTYRSI…LSAVHMGLIY (134 aa)) constitute a cross-link (tryptophyl-tyrosyl-methioninium (Trp-Tyr) (with M-251)). Histidine 93 (proton acceptor) is an active-site residue. A cross-link (tryptophyl-tyrosyl-methioninium (Tyr-Met) (with W-92)) is located at residues 225-251 (YVNPEGPDGIPDPVASARDIRTTFRRM). Histidine 266 is a heme b binding site.

The protein belongs to the peroxidase family. Peroxidase/catalase subfamily. As to quaternary structure, homodimer or homotetramer. Heme b is required as a cofactor. In terms of processing, formation of the three residue Trp-Tyr-Met cross-link is important for the catalase, but not the peroxidase activity of the enzyme.

The protein localises to the cytoplasm. The catalysed reaction is H2O2 + AH2 = A + 2 H2O. It catalyses the reaction 2 H2O2 = O2 + 2 H2O. In terms of biological role, bifunctional enzyme with both catalase and broad-spectrum peroxidase activity. The polypeptide is Catalase-peroxidase (Blumeria hordei (Barley powdery mildew)).